The chain runs to 219 residues: Mitochondrial fission factor homolog A (219 aa).

The Cytoplasmic segment spans residues 1–199 (MAEINRMQYE…ENKERVKHEM (199 aa)). Residues 164–194 (DLALADAASLRRQIIKLNRRLLLLEEENKER) are a coiled coil. A helical; Anchor for type IV membrane protein transmembrane segment spans residues 200–217 (TMYSIIIIFGLLNSWLWL). The Extracellular segment spans residues 218-219 (RR).

The protein belongs to the Tango11 family.

The protein resides in the mitochondrion outer membrane. It localises to the peroxisome. The protein localises to the cytoplasmic vesicle. Its subcellular location is the secretory vesicle. It is found in the synaptic vesicle. Functionally, plays a role in mitochondrial and peroxisomal fission. Promotes the recruitment and association of the fission mediator dynamin-related protein 1 (DNM1L) to the mitochondrial surface. The protein is Mitochondrial fission factor homolog A (mff-a) of Xenopus laevis (African clawed frog).